A 423-amino-acid polypeptide reads, in one-letter code: Glutamyl-tRNA reductase (423 aa).

Substrate-binding positions include 49–52 (TCNR), S107, 112–114 (EPQ), and Q118. C50 functions as the Nucleophile in the catalytic mechanism. 187 to 192 (GAGETI) lines the NADP(+) pocket.

Belongs to the glutamyl-tRNA reductase family. As to quaternary structure, homodimer.

It catalyses the reaction (S)-4-amino-5-oxopentanoate + tRNA(Glu) + NADP(+) = L-glutamyl-tRNA(Glu) + NADPH + H(+). It functions in the pathway porphyrin-containing compound metabolism; protoporphyrin-IX biosynthesis; 5-aminolevulinate from L-glutamyl-tRNA(Glu): step 1/2. Its function is as follows. Catalyzes the NADPH-dependent reduction of glutamyl-tRNA(Glu) to glutamate 1-semialdehyde (GSA). In Pseudoalteromonas atlantica (strain T6c / ATCC BAA-1087), this protein is Glutamyl-tRNA reductase.